Here is a 434-residue protein sequence, read N- to C-terminus: MFS-type transporter pynF (434 aa).

The span at 1–13 shows a compositional bias: basic and acidic residues; the sequence is MSHDQRSPSEEVS. Positions 1–34 are disordered; the sequence is MSHDQRSPSEEVSRTALSKPASESTIVGDGHHPL. 12 helical membrane passes run 44 to 64, 84 to 104, 109 to 129, 138 to 158, 171 to 191, 203 to 223, 249 to 269, 280 to 302, 311 to 331, 334 to 354, 375 to 395, and 402 to 422; these read WLVV…LNAF, IAWI…VVGP, VGAT…LMLT, LILA…YPTI, IALG…TEII, TVRA…VLII, LLFS…FFYL, VTGA…VLTG, FNVI…LHKI, SGAI…LISL, LMMG…GALL, and WYGF…VTIL.

Belongs to the major facilitator superfamily. Monocarboxylate porter (TC 2.A.1.13) family.

The protein resides in the cell membrane. Its function is as follows. MFS-type transporter; part of the gene cluster that mediates the biosynthesis of pyranonigrins, a family of antioxidative compounds. May be involved in the secretion of pyranonigrins. The sequence is that of MFS-type transporter pynF from Aspergillus niger (strain ATCC MYA-4892 / CBS 513.88 / FGSC A1513).